The primary structure comprises 406 residues: chitinase-like effector (406 aa).

The signal sequence occupies residues 1 to 23 (MLTLLPSLILLLSTLSLSTPANA). Residues 26–405 (AIAKAYYPGW…DAVRHGAGFK (380 aa)) form the GH18 domain. Tyrosine 138 and tryptophan 384 together coordinate chitin.

Belongs to the glycosyl hydrolase 18 family.

Its subcellular location is the secreted. In terms of biological role, catalytically impaired chitinase that binds efficiently to chitin, but not to chitosan, xylan, or cellulose. Despite the lack of chitinolytic activity, retains substrate binding specificity and acts as an effector to prevent chitin-triggered immunity by sequestering immunogenic chitin fragments. This is chitinase-like effector (Chi) from Moniliophthora roreri (Frosty pod rot fungus).